A 175-amino-acid polypeptide reads, in one-letter code: Translation initiation factor IF-3 (175 aa).

Belongs to the IF-3 family. Monomer.

It is found in the cytoplasm. IF-3 binds to the 30S ribosomal subunit and shifts the equilibrium between 70S ribosomes and their 50S and 30S subunits in favor of the free subunits, thus enhancing the availability of 30S subunits on which protein synthesis initiation begins. The chain is Translation initiation factor IF-3 from Staphylococcus saprophyticus subsp. saprophyticus (strain ATCC 15305 / DSM 20229 / NCIMB 8711 / NCTC 7292 / S-41).